The chain runs to 331 residues: Putative type II secretion system C-type protein YghF (331 aa).

A helical membrane pass occupies residues 44-60 (MFWLMLLIISAKMAHSL).

This sequence belongs to the GSP C family.

It localises to the cell inner membrane. Involved in a type II secretion system (T2SS, formerly general secretion pathway, GSP) for the export of folded proteins across the outer membrane. The sequence is that of Putative type II secretion system C-type protein YghF from Escherichia coli (strain K12).